The sequence spans 333 residues: DNA-directed RNA polymerase subunit alpha (333 aa).

The segment at 1–235 is alpha N-terminal domain (alpha-NTD); that stretch reads MQTNLLKPKA…EQLAVFAQLE (235 aa). Positions 253 to 333 are alpha C-terminal domain (alpha-CTD); that stretch reads FDPILLRPVD…NWPPQGLDKR (81 aa).

This sequence belongs to the RNA polymerase alpha chain family. Homodimer. The RNAP catalytic core consists of 2 alpha, 1 beta, 1 beta' and 1 omega subunit. When a sigma factor is associated with the core the holoenzyme is formed, which can initiate transcription.

It carries out the reaction RNA(n) + a ribonucleoside 5'-triphosphate = RNA(n+1) + diphosphate. Functionally, DNA-dependent RNA polymerase catalyzes the transcription of DNA into RNA using the four ribonucleoside triphosphates as substrates. This Methylibium petroleiphilum (strain ATCC BAA-1232 / LMG 22953 / PM1) protein is DNA-directed RNA polymerase subunit alpha.